A 330-amino-acid chain; its full sequence is Fructose-1,6-bisphosphatase class 1 (330 aa).

The Mg(2+) site is built by glutamate 84, aspartate 103, leucine 105, and aspartate 106. Residues 106-109 (DGSS), asparagine 196, and lysine 262 contribute to the substrate site. Glutamate 268 is a binding site for Mg(2+).

This sequence belongs to the FBPase class 1 family. As to quaternary structure, homotetramer. Requires Mg(2+) as cofactor.

The protein localises to the cytoplasm. It catalyses the reaction beta-D-fructose 1,6-bisphosphate + H2O = beta-D-fructose 6-phosphate + phosphate. The protein operates within carbohydrate biosynthesis; gluconeogenesis. This is Fructose-1,6-bisphosphatase class 1 from Shewanella putrefaciens (strain CN-32 / ATCC BAA-453).